The following is a 979-amino-acid chain: Receptor-type tyrosine-protein phosphatase-like N (979 aa).

An N-terminal signal peptide occupies residues Met-1–Ala-37. The RESP18 homology domain stretch occupies residues Ile-38–Pro-134. At Ile-38–Arg-575 the chain is on the lumenal side. Cys-56 and Cys-65 are oxidised to a cystine. A compositionally biased stretch (basic and acidic residues) spans Met-113 to Ser-130. Disordered regions lie at residues Met-113 to Leu-173, Gly-289 to Pro-330, and Met-392 to Val-443. Residues Thr-145–Ala-155 show a composition bias toward polar residues. The span at Arg-303 to Lys-322 shows a compositional bias: basic and acidic residues. 2 positions are modified to phosphoserine: Ser-307 and Ser-308. Polar residues predominate over residues Ser-414–Leu-424. Residues Ser-449–Arg-575 form a sufficient for dimerization of proICA512 region. Asn-506 and Asn-524 each carry an N-linked (GlcNAc...) asparagine glycan. The helical transmembrane segment at Ser-576–Met-600 threads the bilayer. Residues Arg-601 to Glu-732 form a sufficient for dimerization of proICA512 region. Residues Arg-601 to Gln-979 are Cytoplasmic-facing. Positions Arg-644–Glu-680 are disordered. The span at Gln-648–Ser-677 shows a compositional bias: low complexity. A Tyrosine-protein phosphatase domain is found at Leu-709–Glu-969. Residue Lys-754 forms a Glycyl lysine isopeptide (Lys-Gly) (interchain with G-Cter in SUMO) linkage.

Belongs to the protein-tyrosine phosphatase family. Receptor class 8 subfamily. Homodimer; shown for the unprocessed protein (proICA512) in the endoplasmic reticulum and resolved during protein maturation as ICA512-TMF seems to be predominantly monomeric in secretory granules; however, ICA512-CCF interacts with ICA512-TMF disrupting the ICA512-TMF:SNTB2 complex. The isolated lumenal RESP18 homology domain has been shown to form disulfide-linked homooligomers. Interacts (via cytoplasmic domain) with phosphorylated SNTB2; this protects PTPRN against cleavage by CAPN1 to produce ICA512-CCF. Dephosphorylation of SNTB2 upon insulin stimulation disrupts the interaction and results in PTPRN cleavage. Interacts with SNX19. ICA512-CCF interacts with PIAS4; in the nucleus. Interacts with STAT5B (phosphorylated); down-regulated by ICA512-CCF sumoylation; ICA512-CCF prevents STAT5B dephosphorylation; ICA512-CCF mediates interaction of STAT5B with PIAS4. Interacts (via RESP18 homology domain) with insulin and proinsulin. Interacts with PTPRN2, PTPRA and PTPRE. Subject to proteolytic cleavage at multiple sites. Subject to cleavage on a pair of basic residues. On exocytosis of secretory granules in pancreatic beta-cells ICA512-TMF is transiently inserted in the plasma-membrane and cleaved by mu-type calpain CPN1 to yield ICA512-CCF. In terms of processing, O-glycosylated. Post-translationally, N-glycosylated. Sumoylated at two sites including Lys-754. Sumoylation decreases interaction with STAT5. As to expression, detected in pituitary. Detected in brain (at protein level). Detected in brain. Weakly expressed in the colon, intestine, stomach and pancreas.

It localises to the membrane. The protein localises to the cytoplasmic vesicle. It is found in the secretory vesicle membrane. Its subcellular location is the perikaryon. The protein resides in the cell projection. It localises to the axon. The protein localises to the synapse. It is found in the cell membrane. Its subcellular location is the endosome. The protein resides in the nucleus. Functionally, plays a role in vesicle-mediated secretory processes. Required for normal accumulation of secretory vesicles in hippocampus, pituitary and pancreatic islets. Required for the accumulation of normal levels of insulin-containing vesicles and preventing their degradation. Plays a role in insulin secretion in response to glucose stimuli. Required for normal accumulation of the neurotransmitters norepinephrine, dopamine and serotonin in the brain. In females, but not in males, required for normal accumulation and secretion of pituitary hormones, such as luteinizing hormone (LH) and follicle-stimulating hormone (FSH). Seems to lack intrinsic enzyme activity. Required to maintain normal levels of renin expression and renin release. May regulate catalytic active protein-tyrosine phosphatases such as PTPRA through dimerization. ICA512-TMF regulates dynamics and exocytosis of insulin secretory granules (SGs); binding of ICA512-TMF to SNTB2/beta-2-syntrophin is proposed to restrain SGs mobility and exocytosis by tethering them to the actin cytoskeleton depending on UTRN; the function is inhibited by cytoplasmic ICA512-CFF dimerizing with ICA512-TMF and displacing SNTB2. Its function is as follows. ICA512-CCF translocated to the nucleus promotes expression of insulin and other granule-related genes; the function implicates binding to and regulating activity of STAT5B probably by preventing its dephosphorylation and potentially by inducing its sumoylation by recruiting PIAS4. Enhances pancreatic beta-cell proliferation by converging with signaling by STAT5B and STAT3. ICA512-CCF located in the cytoplasm regulates dynamics and exocytosis of insulin secretory granules (SGs) by dimerizing with ICA512-TMF and displacing SNTB2 thus enhancing SGs mobility and exocytosis. The chain is Receptor-type tyrosine-protein phosphatase-like N (Ptprn) from Mus musculus (Mouse).